Here is a 382-residue protein sequence, read N- to C-terminus: Galactokinase (382 aa).

34–37 (EHTD) lines the substrate pocket. 124-130 (GAGLSSS) is an ATP binding site. Mg(2+)-binding residues include serine 130 and glutamate 162. The active-site Proton acceptor is the aspartate 174. Tyrosine 223 is a substrate binding site.

This sequence belongs to the GHMP kinase family. GalK subfamily.

It localises to the cytoplasm. It catalyses the reaction alpha-D-galactose + ATP = alpha-D-galactose 1-phosphate + ADP + H(+). It functions in the pathway carbohydrate metabolism; galactose metabolism. Functionally, catalyzes the transfer of the gamma-phosphate of ATP to D-galactose to form alpha-D-galactose-1-phosphate (Gal-1-P). This is Galactokinase from Escherichia coli O1:K1 / APEC.